Reading from the N-terminus, the 265-residue chain is Type 1 encapsulin shell protein (265 aa).

The protein belongs to the encapsulin family. Family 1 subfamily. Multimeric. The encapsulin nanocompartment is formed by 60 subunits. Monomers form pentamers which assemble to form shells. There are 12 pores where the pentamers meet as well as 3-fold axis channels and dimer channels; none are larger than 3-4 Angstroms in diameter. The N-terminus of the protein is inside the shell, the C-terminus is outside. The initiator methionine is partially removed. When isolated from culture filtrate isoelectric focusing gives 3 bands, none of which are glycosylated.

The protein resides in the encapsulin nanocompartment. It is found in the secreted. It localises to the cell membrane. Shell component of a type 1 encapsulin nanocompartment in situ; its cargo protects against oxidative stress at low pH. In situ and in E.coli assembles into proteinaceous shells about 22 nm in diameter with 2.5 nm thick walls. Cargo proteins are targeted to the interior via their C-terminal extensions; empty intact shells can be isolated in E.coli in the absence of cargo protein. There are at least 4 possible cargo proteins, DyP (encoded in the same locus), FolB, BfrB and Rv1762c; DyP and Rv1762c have been identified in vivo. Probably involved in protection against oxidative damage from the host immune response. A T-cell antigen found in bacterial culture cell filtrates, stimulates mouse immune response. Does not have detectable bacteriocin activity. This is Type 1 encapsulin shell protein from Mycobacterium tuberculosis (strain ATCC 25618 / H37Rv).